The chain runs to 264 residues: 5'-nucleotidase SurE (264 aa).

Positions 10, 11, 43, and 99 each coordinate a divalent metal cation.

Belongs to the SurE nucleotidase family. A divalent metal cation is required as a cofactor.

Its subcellular location is the cytoplasm. The catalysed reaction is a ribonucleoside 5'-phosphate + H2O = a ribonucleoside + phosphate. In terms of biological role, nucleotidase that shows phosphatase activity on nucleoside 5'-monophosphates. The protein is 5'-nucleotidase SurE of Methanococcus vannielii (strain ATCC 35089 / DSM 1224 / JCM 13029 / OCM 148 / SB).